The following is a 711-amino-acid chain: Polyribonucleotide nucleotidyltransferase (711 aa).

Residues Asp-486 and Asp-492 each contribute to the Mg(2+) site. A KH domain is found at 553–612; the sequence is PRIHTIKISTDKIKDVIGKGGSVIRALTEETGTTIEIEDDGTVKIAATDGEKAKYAIRRI. The S1 motif domain occupies 622–690; that stretch reads GRIYNSKVTR…RQGRVRLSIK (69 aa). Residues 689–711 form a disordered region; that stretch reads IKEATEQSQPAAAPEAPASEQAE. The span at 694-711 shows a compositional bias: low complexity; that stretch reads EQSQPAAAPEAPASEQAE.

The protein belongs to the polyribonucleotide nucleotidyltransferase family. In terms of assembly, component of the RNA degradosome, which is a multiprotein complex involved in RNA processing and mRNA degradation. Requires Mg(2+) as cofactor.

The protein resides in the cytoplasm. The enzyme catalyses RNA(n+1) + phosphate = RNA(n) + a ribonucleoside 5'-diphosphate. Functionally, involved in mRNA degradation. Catalyzes the phosphorolysis of single-stranded polyribonucleotides processively in the 3'- to 5'-direction. The polypeptide is Polyribonucleotide nucleotidyltransferase (Salmonella typhi).